Here is a 463-residue protein sequence, read N- to C-terminus: Kynureninase 2 (463 aa).

Residues Leu-134, Thr-135, 162–165 (FPSD), Asp-247, His-250, and Tyr-272 each bind pyridoxal 5'-phosphate. Lys-273 is subject to N6-(pyridoxal phosphate)lysine. Pyridoxal 5'-phosphate is bound by residues Trp-312 and Asn-340.

This sequence belongs to the kynureninase family. Homodimer. It depends on pyridoxal 5'-phosphate as a cofactor.

Its subcellular location is the cytoplasm. The enzyme catalyses L-kynurenine + H2O = anthranilate + L-alanine + H(+). It catalyses the reaction 3-hydroxy-L-kynurenine + H2O = 3-hydroxyanthranilate + L-alanine + H(+). It functions in the pathway amino-acid degradation; L-kynurenine degradation; L-alanine and anthranilate from L-kynurenine: step 1/1. The protein operates within cofactor biosynthesis; NAD(+) biosynthesis; quinolinate from L-kynurenine: step 2/3. Its function is as follows. Catalyzes the cleavage of L-kynurenine (L-Kyn) and L-3-hydroxykynurenine (L-3OHKyn) into anthranilic acid (AA) and 3-hydroxyanthranilic acid (3-OHAA), respectively. This Aspergillus niger (strain ATCC MYA-4892 / CBS 513.88 / FGSC A1513) protein is Kynureninase 2 (bna5-2).